Here is a 416-residue protein sequence, read N- to C-terminus: Cysteate synthase (416 aa).

An N6-(pyridoxal phosphate)lysine modification is found at Lys104. Asn130 contributes to the pyridoxal 5'-phosphate binding site.

The protein belongs to the threonine synthase family. Cysteate synthase subfamily. Homotrimer. Pyridoxal 5'-phosphate serves as cofactor.

The catalysed reaction is O-phospho-L-serine + sulfite + H(+) = L-cysteate + phosphate. The protein operates within cofactor biosynthesis; coenzyme M biosynthesis. Functionally, specifically catalyzes the beta-elimination of phosphate from L-phosphoserine and the beta-addition of sulfite to the dehydroalanine intermediate to produce L-cysteate. This chain is Cysteate synthase, found in Methanosarcina barkeri (strain Fusaro / DSM 804).